The sequence spans 391 residues: Tryptophan synthase beta chain (391 aa).

Lys86 carries the N6-(pyridoxal phosphate)lysine modification.

This sequence belongs to the TrpB family. Tetramer of two alpha and two beta chains. Pyridoxal 5'-phosphate is required as a cofactor.

The catalysed reaction is (1S,2R)-1-C-(indol-3-yl)glycerol 3-phosphate + L-serine = D-glyceraldehyde 3-phosphate + L-tryptophan + H2O. It functions in the pathway amino-acid biosynthesis; L-tryptophan biosynthesis; L-tryptophan from chorismate: step 5/5. In terms of biological role, the beta subunit is responsible for the synthesis of L-tryptophan from indole and L-serine. This chain is Tryptophan synthase beta chain, found in Vibrio metschnikovii.